The chain runs to 269 residues: MEMO1 family protein TV1383 (269 aa).

It belongs to the MEMO1 family.

The polypeptide is MEMO1 family protein TV1383 (Thermoplasma volcanium (strain ATCC 51530 / DSM 4299 / JCM 9571 / NBRC 15438 / GSS1)).